The primary structure comprises 552 residues: CTP synthase (552 aa).

The segment at 1-267 (MSKFVFVTGG…AHQTLELLRM (267 aa)) is amidoligase domain. S13 lines the CTP pocket. S13 is a UTP binding site. ATP contacts are provided by residues 14-19 (SIGKGI) and D71. Positions 71 and 141 each coordinate Mg(2+). CTP is bound by residues 148 to 150 (DIE), 188 to 193 (KTKPTQ), and K224. Residues 188-193 (KTKPTQ) and K224 each bind UTP. One can recognise a Glutamine amidotransferase type-1 domain in the interval 292–534 (TVALVGKYVQ…INAVLKRRNA (243 aa)). G354 is an L-glutamine binding site. C381 functions as the Nucleophile; for glutamine hydrolysis in the catalytic mechanism. Residues 382 to 385 (LGMQ), E405, and R462 contribute to the L-glutamine site. Catalysis depends on residues H507 and E509.

The protein belongs to the CTP synthase family. As to quaternary structure, homotetramer.

It carries out the reaction UTP + L-glutamine + ATP + H2O = CTP + L-glutamate + ADP + phosphate + 2 H(+). The enzyme catalyses L-glutamine + H2O = L-glutamate + NH4(+). It catalyses the reaction UTP + NH4(+) + ATP = CTP + ADP + phosphate + 2 H(+). It functions in the pathway pyrimidine metabolism; CTP biosynthesis via de novo pathway; CTP from UDP: step 2/2. With respect to regulation, allosterically activated by GTP, when glutamine is the substrate; GTP has no effect on the reaction when ammonia is the substrate. The allosteric effector GTP functions by stabilizing the protein conformation that binds the tetrahedral intermediate(s) formed during glutamine hydrolysis. Inhibited by the product CTP, via allosteric rather than competitive inhibition. Its function is as follows. Catalyzes the ATP-dependent amination of UTP to CTP with either L-glutamine or ammonia as the source of nitrogen. Regulates intracellular CTP levels through interactions with the four ribonucleotide triphosphates. This chain is CTP synthase, found in Synechocystis sp. (strain ATCC 27184 / PCC 6803 / Kazusa).